Here is a 386-residue protein sequence, read N- to C-terminus: ATP synthase gamma chain 2, chloroplastic (386 aa).

Positions 1 to 22 (MTGSISTSWLLSSPSNSNSASS) are disordered. A chloroplast-targeting transit peptide spans 1 to 60 (MTGSISTSWLLSSPSNSNSASSSESYSFIATLKPVRYYPFQSLTPNRISSRSPLPSIQIR). Residue Cys149 is part of the active site. Cysteines 260 and 266 form a disulfide.

The protein belongs to the ATPase gamma chain family. In terms of assembly, F-type ATPases have 2 components, CF(1) - the catalytic core - and CF(0) - the membrane proton channel. CF(1) has five subunits: alpha(3), beta(3), gamma(1), delta(1), epsilon(1). CF(0) has four main subunits: a, b, b' and c.

Its subcellular location is the plastid. It is found in the chloroplast thylakoid membrane. In terms of biological role, produces ATP from ADP in the presence of a proton gradient across the membrane. The gamma chain is believed to be important in regulating ATPase activity and the flow of protons through the CF(0) complex. The polypeptide is ATP synthase gamma chain 2, chloroplastic (ATPC2) (Arabidopsis thaliana (Mouse-ear cress)).